Here is a 128-residue protein sequence, read N- to C-terminus: Translation initiation factor 5A (128 aa).

Residue Lys-35 is modified to Hypusine.

It belongs to the eIF-5A family.

The protein resides in the cytoplasm. Its function is as follows. Functions by promoting the formation of the first peptide bond. This Methanosarcina acetivorans (strain ATCC 35395 / DSM 2834 / JCM 12185 / C2A) protein is Translation initiation factor 5A (eif5a).